Reading from the N-terminus, the 334-residue chain is Glycerol-3-phosphate dehydrogenase [NAD(P)+] (334 aa).

NADPH contacts are provided by W13, R33, and K106. Sn-glycerol 3-phosphate is bound by residues K106, G137, and S139. NADPH is bound at residue A141. Residues K192, D245, S255, R256, and N257 each contribute to the sn-glycerol 3-phosphate site. K192 (proton acceptor) is an active-site residue. R256 provides a ligand contact to NADPH. NADPH-binding residues include V280 and E282.

Belongs to the NAD-dependent glycerol-3-phosphate dehydrogenase family.

The protein localises to the cytoplasm. The catalysed reaction is sn-glycerol 3-phosphate + NAD(+) = dihydroxyacetone phosphate + NADH + H(+). The enzyme catalyses sn-glycerol 3-phosphate + NADP(+) = dihydroxyacetone phosphate + NADPH + H(+). It participates in membrane lipid metabolism; glycerophospholipid metabolism. In terms of biological role, catalyzes the reduction of the glycolytic intermediate dihydroxyacetone phosphate (DHAP) to sn-glycerol 3-phosphate (G3P), the key precursor for phospholipid synthesis. The sequence is that of Glycerol-3-phosphate dehydrogenase [NAD(P)+] from Chlamydia trachomatis serovar L2 (strain ATCC VR-902B / DSM 19102 / 434/Bu).